Consider the following 71-residue polypeptide: Exodeoxyribonuclease 7 small subunit (71 aa).

Belongs to the XseB family. As to quaternary structure, heterooligomer composed of large and small subunits.

The protein resides in the cytoplasm. It carries out the reaction Exonucleolytic cleavage in either 5'- to 3'- or 3'- to 5'-direction to yield nucleoside 5'-phosphates.. In terms of biological role, bidirectionally degrades single-stranded DNA into large acid-insoluble oligonucleotides, which are then degraded further into small acid-soluble oligonucleotides. This is Exodeoxyribonuclease 7 small subunit from Clostridium botulinum (strain 657 / Type Ba4).